A 596-amino-acid polypeptide reads, in one-letter code: RNA-binding protein involved in heterochromatin assembly dri1 (596 aa).

The residue at position 176 (serine 176) is a Phosphoserine. Positions 236 to 314 constitute an RRM domain; that stretch reads KIVHVAGLTN…RMLEIIPSST (79 aa). The RanBP2-type 1 zinc finger occupies 335 to 364; sequence RPGDWNCPMCGFSNFQRRTSCFRCSFPGPT. The residue at position 429 (serine 429) is a Phosphoserine. 2 consecutive RanBP2-type zinc fingers follow at residues 437-468 and 552-580; these read RAGD…SRAT and DQGD…PHYS.

In terms of assembly, interacts with dpb4. Interacts with chp1.

The protein localises to the chromosome. The protein resides in the nucleus. It is found in the cytoplasm. Its subcellular location is the cytoplasmic granule. Functionally, mediates heterochromatin assembly by promoting RNAi-mediated heterochromatin silencing and histone deacetylation. Binds pericetromeric transcripts and recruits the RNA-induced transcriptional silencing (RITS) complex to heterochromatin. Recruits sir2 to chromatin to promote deacetylation of 'Lys-9' of histone H3. Involved in bipolar spindle assembly during mitosis. Required for proper localization of kinesin-14/Klp2 on the spindle microtubules. The protein is RNA-binding protein involved in heterochromatin assembly dri1 of Schizosaccharomyces pombe (strain 972 / ATCC 24843) (Fission yeast).